The primary structure comprises 235 residues: 1-(5-phosphoribosyl)-5-[(5-phosphoribosylamino)methylideneamino] imidazole-4-carboxamide isomerase (235 aa).

Aspartate 8 serves as the catalytic Proton acceptor. The Proton donor role is filled by aspartate 127.

This sequence belongs to the HisA/HisF family.

Its subcellular location is the cytoplasm. The enzyme catalyses 1-(5-phospho-beta-D-ribosyl)-5-[(5-phospho-beta-D-ribosylamino)methylideneamino]imidazole-4-carboxamide = 5-[(5-phospho-1-deoxy-D-ribulos-1-ylimino)methylamino]-1-(5-phospho-beta-D-ribosyl)imidazole-4-carboxamide. The protein operates within amino-acid biosynthesis; L-histidine biosynthesis; L-histidine from 5-phospho-alpha-D-ribose 1-diphosphate: step 4/9. The chain is 1-(5-phosphoribosyl)-5-[(5-phosphoribosylamino)methylideneamino] imidazole-4-carboxamide isomerase from Aliarcobacter butzleri (strain RM4018) (Arcobacter butzleri).